The primary structure comprises 171 residues: NADH-quinone oxidoreductase subunit I (171 aa).

2 consecutive 4Fe-4S ferredoxin-type domains span residues R63–D92 and T102–I131. 8 residues coordinate [4Fe-4S] cluster: C72, C75, C78, C82, C111, C114, C117, and C121.

The protein belongs to the complex I 23 kDa subunit family. NDH-1 is composed of 14 different subunits. Subunits NuoA, H, J, K, L, M, N constitute the membrane sector of the complex. It depends on [4Fe-4S] cluster as a cofactor.

Its subcellular location is the cell inner membrane. It carries out the reaction a quinone + NADH + 5 H(+)(in) = a quinol + NAD(+) + 4 H(+)(out). In terms of biological role, NDH-1 shuttles electrons from NADH, via FMN and iron-sulfur (Fe-S) centers, to quinones in the respiratory chain. The immediate electron acceptor for the enzyme in this species is believed to be ubiquinone. Couples the redox reaction to proton translocation (for every two electrons transferred, four hydrogen ions are translocated across the cytoplasmic membrane), and thus conserves the redox energy in a proton gradient. The protein is NADH-quinone oxidoreductase subunit I of Paracidovorax citrulli (strain AAC00-1) (Acidovorax citrulli).